We begin with the raw amino-acid sequence, 344 residues long: E3 ubiquitin-protein ligase RING2-A (344 aa).

The interval 2–181 (ATPVNAQCSS…EDNCDSRSHV (180 aa)) is interaction with HIP2. The RING-type zinc finger occupies 48–88 (CPICLDMLKNTMTTKECLHRFCSDCIVTALRSGNKECPTCR). The interaction with nucleosomes via an acidic patch on histone H2A and histone H2B stretch occupies residues 90 to 95 (KLVSKR). The disordered stretch occupies residues 148-230 (QAMHRAQRVR…DPPGGGETGS (83 aa)). The segment covering 180-192 (HVSNPSVHSNQEA) has biased composition (polar residues).

In terms of assembly, component of chromatin-associated Polycomb (PcG) complexes. Component of a PRC1-like complex. Component of some MLL1/MLL complex.

Its subcellular location is the nucleus. It localises to the cytoplasm. The protein localises to the chromosome. The catalysed reaction is S-ubiquitinyl-[E2 ubiquitin-conjugating enzyme]-L-cysteine + [acceptor protein]-L-lysine = [E2 ubiquitin-conjugating enzyme]-L-cysteine + N(6)-ubiquitinyl-[acceptor protein]-L-lysine.. The protein operates within protein modification; protein ubiquitination. In terms of biological role, E3 ubiquitin-protein ligase that mediates monoubiquitination of 'Lys-119' of histone H2A (H2AK119Ub), thereby playing a central role in histone code and gene regulation. H2AK119Ub gives a specific tag for epigenetic transcriptional repression. Essential component of a Polycomb group (PcG) multiprotein PRC1-like complex, a complex class required to maintain the transcriptionally repressive state of many genes, including Hox genes, throughout development. PcG PRC1 complex acts via chromatin remodeling and modification of histones, rendering chromatin heritably changed in its expressibility. The protein is E3 ubiquitin-protein ligase RING2-A (rnf2-a) of Xenopus laevis (African clawed frog).